Reading from the N-terminus, the 118-residue chain is RxLR effector protein PITG_19617 (118 aa).

A signal peptide spans 1 to 21; that stretch reads MRAVYILAMACAATLQASSSA. A RxLR-dEER motif is present at residues 50–64; the sequence is RLLRVEDKEEETEEE.

The protein belongs to the RxLR effector family.

It localises to the secreted. It is found in the host nucleus. Its subcellular location is the host cytoplasm. Functionally, effector that enhances P.infestans colonization of Nicotiana benthamiana leaves. The sequence is that of RxLR effector protein PITG_19617 from Phytophthora infestans (strain T30-4) (Potato late blight agent).